A 523-amino-acid chain; its full sequence is 2-isopropylmalate synthase (523 aa).

The region spanning Val-5–Trp-267 is the Pyruvate carboxyltransferase domain. 4 residues coordinate Mn(2+): Asp-14, His-202, His-204, and Asn-238. The regulatory domain stretch occupies residues Arg-392–Val-523.

Belongs to the alpha-IPM synthase/homocitrate synthase family. LeuA type 1 subfamily. In terms of assembly, homodimer. It depends on Mn(2+) as a cofactor.

It localises to the cytoplasm. It carries out the reaction 3-methyl-2-oxobutanoate + acetyl-CoA + H2O = (2S)-2-isopropylmalate + CoA + H(+). It functions in the pathway amino-acid biosynthesis; L-leucine biosynthesis; L-leucine from 3-methyl-2-oxobutanoate: step 1/4. Catalyzes the condensation of the acetyl group of acetyl-CoA with 3-methyl-2-oxobutanoate (2-ketoisovalerate) to form 3-carboxy-3-hydroxy-4-methylpentanoate (2-isopropylmalate). The protein is 2-isopropylmalate synthase of Salmonella choleraesuis (strain SC-B67).